The following is a 172-amino-acid chain: Glutamyl-tRNA(Gln) amidotransferase subunit C-4, mitochondrial (172 aa).

Residues 1–23 constitute a mitochondrion transit peptide; that stretch reads MIRIPFHLRQTPGRTLHSLVRSF. The disordered stretch occupies residues 51–73; it reads PSKVPQRPHKSTIDGQSTPTRIP.

The protein belongs to the GatC family. Subunit of the heterotrimeric GatCAB amidotransferase (AdT) complex, composed of A, B and C subunits.

The protein localises to the mitochondrion. It carries out the reaction L-glutamyl-tRNA(Gln) + L-glutamine + ATP + H2O = L-glutaminyl-tRNA(Gln) + L-glutamate + ADP + phosphate + H(+). Allows the formation of correctly charged Gln-tRNA(Gln) through the transamidation of misacylated Glu-tRNA(Gln) in the mitochondria. The reaction takes place in the presence of glutamine and ATP through an activated gamma-phospho-Glu-tRNA(Gln). In Culex quinquefasciatus (Southern house mosquito), this protein is Glutamyl-tRNA(Gln) amidotransferase subunit C-4, mitochondrial.